We begin with the raw amino-acid sequence, 196 residues long: Ribonuclease HII (196 aa).

The RNase H type-2 domain occupies 9–196; sequence RLVAGVDEVG…KPVRRALGIE (188 aa). Residues Asp15, Glu16, and Asp107 each coordinate a divalent metal cation.

This sequence belongs to the RNase HII family. It depends on Mn(2+) as a cofactor. Mg(2+) serves as cofactor.

It is found in the cytoplasm. It catalyses the reaction Endonucleolytic cleavage to 5'-phosphomonoester.. In terms of biological role, endonuclease that specifically degrades the RNA of RNA-DNA hybrids. The chain is Ribonuclease HII from Aeromonas hydrophila subsp. hydrophila (strain ATCC 7966 / DSM 30187 / BCRC 13018 / CCUG 14551 / JCM 1027 / KCTC 2358 / NCIMB 9240 / NCTC 8049).